Here is a 1562-residue protein sequence, read N- to C-terminus: MANNEDKLRDYLKRVTAELQQNTRRLREIEGRTHEPVAIVGMACRLPGGVASPEDLWQLVAGDGDAISEFPQDRGWDVEGLYDPDPDASGRTYCRSGGFLHDAGEFDADFFGISPREALAMDPQQRLSLTTAWEAIESAGIDPTALKGSGLGVFVGGWHTGYTSGQTTAVQSPELEGHLVSGAALGFLSGRIAYVLGTDGPALTVDTACSSSLVALHLAVQALRKGECDMALAGGVTVMPNADLFVQFSRQRGLAADGRSKAFATSADGFGPAEGAGVLLVERLSDARRNGHRILAVVRGSAVNQDGASNGLTAPHGPSQQRVIRRALADARLAPGDVDVVEAHGTGTRLGDPIEAQALIATYGQEKSSEQPLRLGALKSNIGHTQAAAGVAGVIKMVQAMRHGLLPKTLHVDEPSDQIDWSAGTVELLTEAVDWPEKQDGGLRRAAVSSFGISGTNAHVVLEEAPAVEDSPAVEPPAGGGVVPWPVSAKTPAALDAQIGQLAAYADGRTDVDPAVAARALVDSRTAMEHRAVAVGDSREALRDALRMPEGLVRGTSSDVGRVAFVFPGQGTQWAGMGAELLDSSPEFAASMAECETALSRYVDWSLEAVVRQEPGAPTLDRVDVVQPVTFAVMVSLAKVWQHHGITPQAVVGHSQGEIAAAYVAGALTLDDAARVVTLRSKSIAAHLAGKGGMISLALDEAAVLKRLSDFDGLSVAAVNGPTATVVSGDPTQIEELARTCEADGVRARIIPVDYASHSRQVEIIEKELAEVLAGLAPQAPHVPFFSTLEGTWITEPVLDGTYWYRNLRHRVGFAPAVETLAVDGFTHFIEVSAHPVLTMTLPETVTGLGTLRREQGGQERLVTSLAEAWANGLTIDWAPILPTATGHHPELPTYAFQTERFWLQSSAPTSAADDWRYRVEWKPLTASGQADLSGRWIVAVGSEPEAELLGALKAAGAEVDVLEAGADDDREALAARLTALTTGDGFTGVVSLLDDLVPQVAWVQALGDAGIKAPLWSVTQGAVSVGRLDTPADPDRAMLWGLGRVVALEHPERWAGLVDLPAQPDAAALAHLVTALSGATGEDQIAIRTTGLHARRLARAPLHGRRPTRDWQPHGTVLITGGTGALGSHAARWMAHHGAEHLLLVSRSGEQAPGATQLTAELTASGARVTIAACDVADPHAMRTLLDAIPAETPLTAVVHTAGAPGGDPLDVTGPEDIARILGAKTSGAEVLDDLLRGTPLDAFVLYSSNAGVWGSGSQGVYAAANAHLDALAARRRARGETATSVAWGLWAGDGMGRGADDAYWQRRGIRPMSPDRALDELAKALSHDETFVAVADVDWERFAPAFTVSRPSLLLDGVPEARQALAAPVGAPAPGDAAVAPTGQSSALAAITALPEPERRPALLTLVRTHAAAVLGHSSPDRVAPGRAFTELGFDSLTAVQLRNQLSTVVGNRLPATTVFDHPTPAALAAHLHEAYLAPAEPAPTDWEGRVRRALAELPLDRLRDAGVLDTVLRLTGIEPEPGSGGSDGGAADPGAEPEASIDDLDAEALIRMALGPRNT.

The Ketosynthase family 3 (KS3) domain maps to 34–464 (HEPVAIVGMA…GTNAHVVLEE (431 aa)). A module 5 region spans residues 37 to 1475 (VAIVGMACRL…TPAALAAHLH (1439 aa)). Catalysis depends on C209, which acts as the Acyl-thioester intermediate; for beta-ketoacyl synthase activity. Residues H344 and H384 each act as for beta-ketoacyl synthase activity in the active site. The segment at 565-866 (FVFPGQGTQW…GGQERLVTSL (302 aa)) is acyltransferase. Residue S655 is the Acyl-ester intermediate; for acyltransferase activity of the active site. The beta-ketoacyl reductase stretch occupies residues 1116–1293 (GTVLITGGTG…ATSVAWGLWA (178 aa)). NADP(+)-binding positions include 1124–1127 (TGAL), 1147–1150 (SRSG), 1176–1177 (DV), K1226, and 1248–1249 (YS). Y1263 serves as the catalytic Acyl-ester intermediate; for beta-ketoacyl reductase activity. Residues 1403 to 1478 (PALLTLVRTH…ALAAHLHEAY (76 aa)) form the Carrier domain. S1438 is subject to O-(pantetheine 4'-phosphoryl)serine. Positions 1519-1548 (GIEPEPGSGGSDGGAADPGAEPEASIDDLD) are disordered. Over residues 1532 to 1541 (GAADPGAEPE) the composition is skewed to low complexity.

Homodimer. Pikromycin PKS consists of a combination of multimodular (PikAI and PikAII) and monomodular (PikAIII and PikAIV) polypeptides each coding for a functional synthase subunit which participates in 1 (monomodular) or 2 (multimodular) of the six FAS-like elongation steps required for formation of the polyketide. Module 1, 2, 3, 4, 5, and 6 participating in biosynthesis steps 1, 2, 3, 4, 5, and 6, respectively. It depends on pantetheine 4'-phosphate as a cofactor.

It catalyses the reaction 5 (S)-methylmalonyl-CoA + malonyl-CoA + 5 NADPH + 11 H(+) = 10-deoxymethynolide + 6 CO2 + 5 NADP(+) + 6 CoA + 2 H2O. The enzyme catalyses 6 (S)-methylmalonyl-CoA + malonyl-CoA + 5 NADPH + 12 H(+) = narbonolide + 7 CO2 + 5 NADP(+) + 7 CoA + 2 H2O. It functions in the pathway antibiotic biosynthesis. Its function is as follows. Involved in the biosynthesis of 12- and 14-membered ring macrolactone antibiotics such as methymycin and neomethymycin, and pikromycin and narbomycin, respectively. Component of the pikromycin PKS which catalyzes the biosynthesis of both precursors 10-deoxymethynolide (12-membered ring macrolactone) and narbonolide (14-membered ring macrolactone). Chain elongation through PikAI, PikAII and PikAIII followed by thioesterase catalyzed termination results in the production of 10-deoxymethynolide, while continued elongation through PikAIV, followed by thioesterase (TE) catalyzed cyclization results in the biosynthesis of the narbonolide. This chain is Pikromycin polyketide synthase component PikAIII, found in Streptomyces venezuelae.